The primary structure comprises 2988 residues: NBPF family member NBPF14 (2988 aa).

Residues 75-119 are a coiled coil; it reads RQFKEEKLAEQLKQAEELRQYKVLVHSQERELTQLREKLREGRDA. Disordered stretches follow at residues 161–200, 451–474, and 520–566; these read KLSP…SKVP, EKVQ…PEDS, and WEDA…EGYS. Positions 165-177 are enriched in acidic residues; it reads ENDEDEDEDVQVE. Olduvai domains lie at 165 to 259, 436 to 528, 529 to 600, 601 to 692, 695 to 750, 751 to 843, 844 to 919, 920 to 1012, 1013 to 1105, 1108 to 1163, 1164 to 1256, 1257 to 1349, 1352 to 1407, 1408 to 1500, 1501 to 1593, 1596 to 1651, 1652 to 1744, 1745 to 1837, 1840 to 1895, 1896 to 1988, 1989 to 2081, 2084 to 2139, 2140 to 2232, 2233 to 2325, 2328 to 2383, 2384 to 2476, 2477 to 2569, 2572 to 2627, 2628 to 2720, 2721 to 2813, 2816 to 2889, and 2890 to 2988; these read ENDE…NILP, ENDN…HIIP, ENES…VDIG, RHRW…PSCP, SREL…LDVD, RIKK…RSKK, ERRR…LDVD, ERRR…PSCP, RFKK…RSKK, SREL…RSKK, and ERRR…IFPQ. Over residues 190–200 the composition is skewed to basic and acidic residues; sequence EVQKAEESKVP. Acidic residues-rich tracts occupy residues 530–539 and 550–562; these read NESDDEEEEE and ESEE…ESWD. Disordered stretches follow at residues 754–773, 828–871, and 999–1038; these read KDEE…SREL, EKKG…LDEK, and KGKG…ELLD. Basic residues-rich tracts occupy residues 831 to 849 and 1000 to 1018; these read GKGK…RRGR. The segment at 1243 to 1282 is disordered; it reads KGKGKKRRGRRSKKERRRGRKEGEEDQNPPCPRLSRELLD. Residues 1244-1262 are compositionally biased toward basic residues; the sequence is GKGKKRRGRRSKKERRRGR. Residues 1487-1521 form a disordered region; that stretch reads KGKGKKRRGRRSKKERRRGRKEGEEDQNPPCPRLS. The span at 1488 to 1506 shows a compositional bias: basic residues; the sequence is GKGKKRRGRRSKKERRRGR. The interval 1731–1770 is disordered; the sequence is KGKGKKRRGRRSKKERRRGRKEGEEDQNPPCPRLSRELLD. Positions 1732–1750 are enriched in basic residues; it reads GKGKKRRGRRSKKERRRGR. The segment at 1975 to 2014 is disordered; the sequence is KGKGKKRRGRRSKKERRRGRKEGEEDQNPPCPRLSRELLD. Residues 1976 to 1994 are compositionally biased toward basic residues; sequence GKGKKRRGRRSKKERRRGR. The segment at 2219 to 2258 is disordered; the sequence is KGKGKKRRGRRSKKERRRGRKEGEEDQNPPCPRLSRELLD. A compositionally biased stretch (basic residues) spans 2220–2238; sequence GKGKKRRGRRSKKERRRGR. The interval 2463–2502 is disordered; the sequence is KGKGKKRRGRRSKKERRRGRKEGEEDQNPPCPRLSRELLD. Positions 2464-2482 are enriched in basic residues; that stretch reads GKGKKRRGRRSKKERRRGR. 2 disordered regions span residues 2707-2745 and 2877-2909; these read KGKG…RELL and GKGK…CPRL. Basic residues-rich tracts occupy residues 2708 to 2726 and 2877 to 2895; these read GKGK…RRGR.

It belongs to the NBPF family. In terms of tissue distribution, expressed in spleen and fetal liver.

The protein localises to the cytoplasm. The polypeptide is NBPF family member NBPF14 (Homo sapiens (Human)).